Consider the following 596-residue polypeptide: Aspartate--tRNA(Asp/Asn) ligase (596 aa).

Residue Glu175 participates in L-aspartate binding. The tract at residues 199–202 (QQYK) is aspartate. Residues Arg221 and His454 each contribute to the L-aspartate site. 221–223 (RDE) is a binding site for ATP. Glu488 lines the ATP pocket. Arg495 lines the L-aspartate pocket. 540-543 (GIDR) contributes to the ATP binding site.

This sequence belongs to the class-II aminoacyl-tRNA synthetase family. Type 1 subfamily. In terms of assembly, homodimer.

The protein resides in the cytoplasm. The enzyme catalyses tRNA(Asx) + L-aspartate + ATP = L-aspartyl-tRNA(Asx) + AMP + diphosphate. Its function is as follows. Aspartyl-tRNA synthetase with relaxed tRNA specificity since it is able to aspartylate not only its cognate tRNA(Asp) but also tRNA(Asn). Reaction proceeds in two steps: L-aspartate is first activated by ATP to form Asp-AMP and then transferred to the acceptor end of tRNA(Asp/Asn). The polypeptide is Aspartate--tRNA(Asp/Asn) ligase (Mesorhizobium japonicum (strain LMG 29417 / CECT 9101 / MAFF 303099) (Mesorhizobium loti (strain MAFF 303099))).